A 923-amino-acid polypeptide reads, in one-letter code: Rap guanine nucleotide exchange factor 3 (923 aa).

S79 carries the phosphoserine modification. The 77-residue stretch at 110-186 (ATCPNLIRDR…RDAQFYRFPG (77 aa)) folds into the DEP domain. Positions 218–242 (TVALRKPPGQRTDEELDLIFEELLH) are interaction with PDE3B. 3',5'-cyclic AMP-binding positions include 311–314 (GQLA) and 321–322 (RA). The region spanning 384-518 (NRYTVMSGTP…EQWPERRRCH (135 aa)) is the N-terminal Ras-GEF domain. Residues 398-422 (ELLLEAMGPDSSAHDPTETFLSDFL) are interaction with PDE3B. Residues S528 and S864 each carry the phosphoserine modification. The 228-residue stretch at 662–889 (SAKDLAGQLT…ARISTCSEQS (228 aa)) folds into the Ras-GEF domain.

As to quaternary structure, interacts with PDE3B and PIK3R6; form a signaling complex that regulates phosphatidylinositol 3-kinase gamma in angiogenesis. Widely expressed with highest levels in adult kidney, heart, thyroid and brain, and fetal kidney.

It is found in the endomembrane system. Guanine nucleotide exchange factor (GEF) for RAP1A and RAP2A small GTPases that is activated by binding cAMP. Through simultaneous binding of PDE3B to RAPGEF3 and PIK3R6 is assembled in a signaling complex in which it activates the PI3K gamma complex and which is involved in angiogenesis. Plays a role in the modulation of the cAMP-induced dynamic control of endothelial barrier function through a pathway that is independent on Rho-mediated signaling. Required for the actin rearrangement at cell-cell junctions, such as stress fibers and junctional actin. This is Rap guanine nucleotide exchange factor 3 (RAPGEF3) from Homo sapiens (Human).